The primary structure comprises 586 residues: Chaperonin 60 subunit alpha 1, chloroplastic (586 aa).

The N-terminal 46 residues, 1–46 (MASANALSSASVLCSSRQSKLGGGNQQQGQRVSYNKRTIRRFSVRA), are a transit peptide targeting the chloroplast. Phosphoserine is present on Ser90.

Belongs to the chaperonin (HSP60) family. Part of the Cpn60 complex composed of 7 alpha and 7 beta subunits. This complex shows ATPase activity. The Cpn60 complex interacts with the Cpn10 complex. As to expression, expressed in leaves, stems, siliques and flowers.

The protein localises to the plastid. The protein resides in the chloroplast. Binds RuBisCO small and large subunits and is implicated in the assembly of the enzyme oligomer. Involved in protein assisted folding. Required for proper chloroplast development. The sequence is that of Chaperonin 60 subunit alpha 1, chloroplastic (CPN60A1) from Arabidopsis thaliana (Mouse-ear cress).